Consider the following 331-residue polypeptide: Syntaxin-43 (331 aa).

The Cytoplasmic portion of the chain corresponds to 1–305 (MATRNRTLLF…KAERTQRQGG (305 aa)). Disordered regions lie at residues 20–45 (VRAP…KSGL) and 59–80 (PNRS…GTIT). Positions 31 to 40 (TLTEHNSLTG) are enriched in polar residues. The stretch at 124–154 (KEDQHQIETLTQEVTFLLKKSEKQLQRLSAA) forms a coiled coil. Residues 235–297 (EEISIEREKE…DDGLKQLQKA (63 aa)) form the t-SNARE coiled-coil homology domain. Residues 306-326 (MVMCASVLVILCFIMLVLLIL) traverse the membrane as a helical; Anchor for type IV membrane protein segment. Topologically, residues 327–331 (KEILL) are vesicular.

Belongs to the syntaxin family. In terms of assembly, part of the t-SNARE complex. In terms of tissue distribution, expressed at low levels in roots, stems, flowers and leaves.

The protein localises to the golgi apparatus. It localises to the trans-Golgi network membrane. Contributes to the regulation of secretory and vacuolar transport pathways in the post-Golgi network, and to the maintenance of the Golgi apparatus and trans-Golgi network (TGN) morphologies. Vesicle trafficking protein that functions in the secretory pathway and mediates liposome fusion. Required for extracellular resistance responses to a fungal pathogen. Also involved in the protection of chloroplasts from salicylic acid-dependent biotic stress. The polypeptide is Syntaxin-43 (Arabidopsis thaliana (Mouse-ear cress)).